A 233-amino-acid polypeptide reads, in one-letter code: Small ribosomal subunit protein uS2 (233 aa).

Belongs to the universal ribosomal protein uS2 family.

This Bacillus cytotoxicus (strain DSM 22905 / CIP 110041 / 391-98 / NVH 391-98) protein is Small ribosomal subunit protein uS2.